The following is a 1098-amino-acid chain: Probable arabinosyltransferase B (1098 aa).

12 helical membrane passes run 28-50, 217-239, 271-293, 402-419, 434-456, 472-494, 541-558, 570-587, 597-619, 626-648, 663-685, and 698-720; these read WVAT…LPVV, LKLL…LWRL, ASWR…WHVI, LRPE…YVLI, AVVT…AALV, LVGT…TVVF, FGFL…FIML, PAWR…FLMF, GLFA…PSVL, MAFL…GWWY, IDGI…YAAW, and LIRA…VFVA.

Belongs to the emb family.

The protein localises to the cell membrane. Its function is as follows. Arabinosyl transferase responsible for the polymerization of arabinose into the arabinan of arabinogalactan. This is Probable arabinosyltransferase B (embB) from Mycobacterium bovis (strain ATCC BAA-935 / AF2122/97).